The primary structure comprises 588 residues: Tannase (588 aa).

An N-terminal signal peptide occupies residues Met1–Ala18. Cystine bridges form between Cys25/Cys71, Cys194/Cys502, and Cys261/Cys278. Ser195 serves as the catalytic Acyl-ester intermediate. Ca(2+) contacts are provided by Asp262, Asp265, Asp269, and Val271. Gln317 carries the post-translational modification Pyrrolidone carboxylic acid. Active-site charge relay system residues include Asp455 and His501.

This sequence belongs to the tannase family. In terms of assembly, heterooctamer of 4 33 kDa and 4 30 kDa subunits linked by disulfide bond(s). Post-translationally, the protein is glycosylated to a carbohydrate content of 22.7%. The N-terminus of the 30 kDa subunit is blocked.

It carries out the reaction digallate + H2O = 2 3,4,5-trihydroxybenzoate + H(+). Its function is as follows. Hydrolyzes ester bonds of tannic acid to produce gallic acid and glucose. The polypeptide is Tannase (Aspergillus oryzae (strain ATCC 42149 / RIB 40) (Yellow koji mold)).